A 567-amino-acid polypeptide reads, in one-letter code: Dynein, 70 kDa intermediate chain, flagellar outer arm (567 aa).

WD repeat units lie at residues 214–254, 261–302, 360–399, and 404–444; these read VPTS…GPVE, SHRD…ECVE, GHHG…KTPI, and YHPT…NEPT.

Belongs to the dynein intermediate chain family. Consists of at least 3 heavy chains (alpha, beta and gamma), 2 intermediate chains and 8 light chains.

The protein resides in the cytoplasm. It localises to the cytoskeleton. Its subcellular location is the flagellum axoneme. Functionally, may play a role in regulating dynein heavy chain (DHC) activity. May function in holding IC78 to the DHC, or in stabilizing the entire dynein complex. In Chlamydomonas reinhardtii (Chlamydomonas smithii), this protein is Dynein, 70 kDa intermediate chain, flagellar outer arm (ODA6).